A 182-amino-acid polypeptide reads, in one-letter code: Protein Syd (182 aa).

Belongs to the Syd family.

It is found in the cell inner membrane. Functionally, interacts with the SecY protein in vivo. May bind preferentially to an uncomplexed state of SecY, thus functioning either as a chelating agent for excess SecY in the cell or as a regulatory factor that negatively controls the translocase function. In Pectobacterium atrosepticum (strain SCRI 1043 / ATCC BAA-672) (Erwinia carotovora subsp. atroseptica), this protein is Protein Syd.